Consider the following 406-residue polypeptide: uncharacterized protein (406 aa).

This sequence to S.pombe SpAC12C2.04.

The protein localises to the cytoplasm. The protein resides in the nucleus. This is an uncharacterized protein from Schizosaccharomyces pombe (strain 972 / ATCC 24843) (Fission yeast).